A 207-amino-acid polypeptide reads, in one-letter code: Holliday junction branch migration complex subunit RuvA (207 aa).

The interval 1–65 is domain I; sequence MYDYIRGVLT…ETEHVLYGFH (65 aa). Residues 66–144 form a domain II region; sequence TRGERECFRM…DLLPLDAQIL (79 aa). The flexible linker stretch occupies residues 145 to 155; the sequence is ASWEPAKPSCM. The segment at 155–207 is domain III; it reads MEEGIQALAALGYPKSSAERMIAEAMSELPDHASVAEILPIALKKNLQGLNKI.

This sequence belongs to the RuvA family. Homotetramer. Forms an RuvA(8)-RuvB(12)-Holliday junction (HJ) complex. HJ DNA is sandwiched between 2 RuvA tetramers; dsDNA enters through RuvA and exits via RuvB. An RuvB hexamer assembles on each DNA strand where it exits the tetramer. Each RuvB hexamer is contacted by two RuvA subunits (via domain III) on 2 adjacent RuvB subunits; this complex drives branch migration. In the full resolvosome a probable DNA-RuvA(4)-RuvB(12)-RuvC(2) complex forms which resolves the HJ.

The protein resides in the cytoplasm. In terms of biological role, the RuvA-RuvB-RuvC complex processes Holliday junction (HJ) DNA during genetic recombination and DNA repair, while the RuvA-RuvB complex plays an important role in the rescue of blocked DNA replication forks via replication fork reversal (RFR). RuvA specifically binds to HJ cruciform DNA, conferring on it an open structure. The RuvB hexamer acts as an ATP-dependent pump, pulling dsDNA into and through the RuvAB complex. HJ branch migration allows RuvC to scan DNA until it finds its consensus sequence, where it cleaves and resolves the cruciform DNA. This Chlamydia abortus (strain DSM 27085 / S26/3) (Chlamydophila abortus) protein is Holliday junction branch migration complex subunit RuvA.